The chain runs to 137 residues: Acidic phospholipase A2 1 (137 aa).

Residues 1–11 (LVAVCVSLLGA) form the signal peptide. A propeptide spanning residues 12 to 19 (ANIPPQPL) is cleaved from the precursor. Cystine bridges form between C30-C89, C44-C136, C46-C62, C61-C117, C68-C110, C78-C103, and C96-C108. Ca(2+) is bound by residues Y45, G47, and G49. Residues G49 and H65 each contribute to the tridecanoate site. Residue H65 is part of the active site. Residue D66 participates in Ca(2+) binding. D111 is a catalytic residue.

In terms of assembly, monomer. Ca(2+) serves as cofactor. As to expression, expressed by the venom gland.

The protein resides in the secreted. The enzyme catalyses a 1,2-diacyl-sn-glycero-3-phosphocholine + H2O = a 1-acyl-sn-glycero-3-phosphocholine + a fatty acid + H(+). Its function is as follows. Snake venom phospholipase A2 (PLA2) that shows anticoagulant and neurotoxic activities. PLA2 catalyzes the calcium-dependent hydrolysis of the 2-acyl groups in 3-sn-phosphoglycerides. The chain is Acidic phospholipase A2 1 from Bungarus caeruleus (Indian krait).